Here is a 714-residue protein sequence, read N- to C-terminus: BRCA1-associated RING domain protein 1 (714 aa).

An RING-type zinc finger spans residues 25 to 63 (CPLCLKLLNRPVLLPCDHVFCDSCVHKSSQVESGCPVCK). 2 disordered regions span residues 106-165 (YKND…QDWT) and 254-283 (KAQN…DAME). A compositionally biased stretch (basic and acidic residues) spans 118–134 (KHGESEDSEMTDKDVSK). Positions 135–147 (RSGGTDSSSRDGS) are enriched in low complexity. Basic and acidic residues-rich tracts occupy residues 155–165 (SDPRPKHQDWT) and 264–283 (SHTE…DAME). The C2HC pre-PHD-type zinc finger occupies 331–382 (ITICGFCQSARVSEATGEMLHYSRGRPVDGDDIFRSNVIHVHSACIEWAPQV). A PHD-type zinc finger spans residues 402-451 (IKCTKCSLKGAALGCFVKSCRRSYHVPCAREISRCRWDYEDFLLLCPAHS). 2 consecutive BRCT domains span residues 482–577 (EQTP…PFEI) and 598–713 (NKPK…HPVI).

In terms of assembly, component of a DNA-protein complex on WUS and WOX5 promoters. Interacts with SYD. Forms heterodimer with BRCA1. Expressed in the shoot apical meristem (SAM), roots, flowers, embryos and seedlings. Mostly expressed in flowers and siliques, and, to a lower extent, in roots, rosette leaves, inflorescence and young cauline leaves.

The protein resides in the nucleus. In terms of biological role, binds specifically to H3K4me3 regions of target genes (e.g. WUS and WOX5) promoters to repress their transcription via chromatin remodeling. Required for the shoot apical meristem (SAM) organization and maintenance, by confining WUS expression to the organizing center, and for the quiescent center (QC) development in the root apical meristem (RAM), by repressing WOX5 expression in the root proximal meristem. Plays a role in DNA repair and in cell-cycle control. Required for the repair of DNA double-strand breaks (DSBs), both natural and induced by genotoxic stress, by homologous recombination (HR). The chain is BRCA1-associated RING domain protein 1 from Arabidopsis thaliana (Mouse-ear cress).